The primary structure comprises 350 residues: Ribosomal RNA small subunit methyltransferase C (350 aa).

This sequence belongs to the methyltransferase superfamily. RsmC family. In terms of assembly, monomer.

The protein localises to the cytoplasm. It carries out the reaction guanosine(1207) in 16S rRNA + S-adenosyl-L-methionine = N(2)-methylguanosine(1207) in 16S rRNA + S-adenosyl-L-homocysteine + H(+). In terms of biological role, specifically methylates the guanine in position 1207 of 16S rRNA in the 30S particle. The polypeptide is Ribosomal RNA small subunit methyltransferase C (Sodalis glossinidius (strain morsitans)).